The primary structure comprises 284 residues: 4-hydroxybenzoate octaprenyltransferase (284 aa).

Helical transmembrane passes span 14–34 (VHQP…LWIT), 41–61 (FIVL…GCVI), 93–113 (WVFF…NNII), 134–154 (YIYL…LIVY), 166–186 (WLLF…YAMV), 209–229 (IVIG…GIVE), 233–253 (IIFY…QQVL), and 262–282 (CLWA…GIVL).

It belongs to the UbiA prenyltransferase family. Requires Mg(2+) as cofactor.

Its subcellular location is the cell inner membrane. It catalyses the reaction all-trans-octaprenyl diphosphate + 4-hydroxybenzoate = 4-hydroxy-3-(all-trans-octaprenyl)benzoate + diphosphate. The protein operates within cofactor biosynthesis; ubiquinone biosynthesis. Catalyzes the prenylation of para-hydroxybenzoate (PHB) with an all-trans polyprenyl group. Mediates the second step in the final reaction sequence of ubiquinone-8 (UQ-8) biosynthesis, which is the condensation of the polyisoprenoid side chain with PHB, generating the first membrane-bound Q intermediate 3-octaprenyl-4-hydroxybenzoate. The protein is 4-hydroxybenzoate octaprenyltransferase of Blochmanniella floridana.